The following is a 290-amino-acid chain: 33 kDa chaperonin (290 aa).

2 disulfides stabilise this stretch: cysteine 235-cysteine 237 and cysteine 268-cysteine 271.

This sequence belongs to the HSP33 family. Under oxidizing conditions two disulfide bonds are formed involving the reactive cysteines. Under reducing conditions zinc is bound to the reactive cysteines and the protein is inactive.

Its subcellular location is the cytoplasm. Redox regulated molecular chaperone. Protects both thermally unfolding and oxidatively damaged proteins from irreversible aggregation. Plays an important role in the bacterial defense system toward oxidative stress. This chain is 33 kDa chaperonin, found in Streptococcus pneumoniae (strain JJA).